A 311-amino-acid polypeptide reads, in one-letter code: Ribosomal RNA small subunit methyltransferase H 1 (311 aa).

S-adenosyl-L-methionine contacts are provided by residues 33-35 (AGH), aspartate 53, phenylalanine 80, aspartate 101, and glutamine 108.

It belongs to the methyltransferase superfamily. RsmH family.

The protein localises to the cytoplasm. The catalysed reaction is cytidine(1402) in 16S rRNA + S-adenosyl-L-methionine = N(4)-methylcytidine(1402) in 16S rRNA + S-adenosyl-L-homocysteine + H(+). In terms of biological role, specifically methylates the N4 position of cytidine in position 1402 (C1402) of 16S rRNA. The polypeptide is Ribosomal RNA small subunit methyltransferase H 1 (Alkaliphilus metalliredigens (strain QYMF)).